The chain runs to 660 residues: 1-deoxy-D-xylulose-5-phosphate synthase (660 aa).

Thiamine diphosphate-binding positions include H86 and 127-129; that span reads AHS. D164 is a Mg(2+) binding site. Thiamine diphosphate-binding positions include 165–166, N196, Y306, and E388; that span reads GS. N196 contacts Mg(2+).

It belongs to the transketolase family. DXPS subfamily. In terms of assembly, homodimer. Mg(2+) serves as cofactor. Requires thiamine diphosphate as cofactor.

The catalysed reaction is D-glyceraldehyde 3-phosphate + pyruvate + H(+) = 1-deoxy-D-xylulose 5-phosphate + CO2. Its pathway is metabolic intermediate biosynthesis; 1-deoxy-D-xylulose 5-phosphate biosynthesis; 1-deoxy-D-xylulose 5-phosphate from D-glyceraldehyde 3-phosphate and pyruvate: step 1/1. Catalyzes the acyloin condensation reaction between C atoms 2 and 3 of pyruvate and glyceraldehyde 3-phosphate to yield 1-deoxy-D-xylulose-5-phosphate (DXP). The chain is 1-deoxy-D-xylulose-5-phosphate synthase from Gluconobacter oxydans (strain 621H) (Gluconobacter suboxydans).